A 462-amino-acid polypeptide reads, in one-letter code: Elongation factor 1-alpha, somatic form (462 aa).

Gly-2 carries the n,N,N-trimethylglycine modification. The region spanning 5–242 (KTHINIVVIG…DCILPPSRPT (238 aa)) is the tr-type G domain. Residues 14-21 (GHVDSGKS) form a G1 region. 14–21 (GHVDSGKS) contacts GTP. Positions 70-74 (GITID) are G2. Residues 91 to 94 (DAPG) form a G3 region. Residues 91–95 (DAPGH) and 153–156 (NKMD) each bind GTP. A G4 region spans residues 153–156 (NKMD). The segment at 194-196 (SGW) is G5. 5-glutamyl glycerylphosphorylethanolamine is present on residues Glu-301 and Glu-374.

Belongs to the TRAFAC class translation factor GTPase superfamily. Classic translation factor GTPase family. EF-Tu/EF-1A subfamily.

The protein resides in the cytoplasm. This protein promotes the GTP-dependent binding of aminoacyl-tRNA to the A-site of ribosomes during protein biosynthesis. In Xenopus laevis (African clawed frog), this protein is Elongation factor 1-alpha, somatic form (eef1as).